The chain runs to 448 residues: Probable glycine dehydrogenase (decarboxylating) subunit 1 (448 aa).

This sequence belongs to the GcvP family. N-terminal subunit subfamily. The glycine cleavage system is composed of four proteins: P, T, L and H. In this organism, the P 'protein' is a heterodimer of two subunits.

The enzyme catalyses N(6)-[(R)-lipoyl]-L-lysyl-[glycine-cleavage complex H protein] + glycine + H(+) = N(6)-[(R)-S(8)-aminomethyldihydrolipoyl]-L-lysyl-[glycine-cleavage complex H protein] + CO2. The glycine cleavage system catalyzes the degradation of glycine. The P protein binds the alpha-amino group of glycine through its pyridoxal phosphate cofactor; CO(2) is released and the remaining methylamine moiety is then transferred to the lipoamide cofactor of the H protein. This Staphylococcus carnosus (strain TM300) protein is Probable glycine dehydrogenase (decarboxylating) subunit 1.